A 180-amino-acid chain; its full sequence is ATP synthase subunit delta (180 aa).

This sequence belongs to the ATPase delta chain family. In terms of assembly, F-type ATPases have 2 components, F(1) - the catalytic core - and F(0) - the membrane proton channel. F(1) has five subunits: alpha(3), beta(3), gamma(1), delta(1), epsilon(1). F(0) has three main subunits: a(1), b(2) and c(10-14). The alpha and beta chains form an alternating ring which encloses part of the gamma chain. F(1) is attached to F(0) by a central stalk formed by the gamma and epsilon chains, while a peripheral stalk is formed by the delta and b chains.

Its subcellular location is the cell membrane. F(1)F(0) ATP synthase produces ATP from ADP in the presence of a proton or sodium gradient. F-type ATPases consist of two structural domains, F(1) containing the extramembraneous catalytic core and F(0) containing the membrane proton channel, linked together by a central stalk and a peripheral stalk. During catalysis, ATP synthesis in the catalytic domain of F(1) is coupled via a rotary mechanism of the central stalk subunits to proton translocation. Its function is as follows. This protein is part of the stalk that links CF(0) to CF(1). It either transmits conformational changes from CF(0) to CF(1) or is implicated in proton conduction. This Mycoplasma mobile (strain ATCC 43663 / 163K / NCTC 11711) (Mesomycoplasma mobile) protein is ATP synthase subunit delta.